Consider the following 261-residue polypeptide: uncharacterized protein (261 aa).

It belongs to the BtpA family.

This is an uncharacterized protein from Methanocaldococcus jannaschii (strain ATCC 43067 / DSM 2661 / JAL-1 / JCM 10045 / NBRC 100440) (Methanococcus jannaschii).